Reading from the N-terminus, the 225-residue chain is Germin-like protein 8-6 (225 aa).

The signal sequence occupies residues Met-1–Ala-23. Cysteines 33 and 48 form a disulfide. The region spanning Ala-63–Asp-213 is the Cupin type-1 domain. Asn-77 is a glycosylation site (N-linked (GlcNAc...) asparagine). Residues His-110, His-112, and Glu-117 each contribute to the Mn(2+) site. Asn-136 carries an N-linked (GlcNAc...) asparagine glycan. Residue His-158 participates in Mn(2+) binding.

Belongs to the germin family. As to quaternary structure, oligomer (believed to be a pentamer but probably hexamer).

The protein resides in the secreted. The protein localises to the extracellular space. Its subcellular location is the apoplast. Functionally, plays a role in broad-spectrum disease resistance. Probably has no oxalate oxidase activity even if the active site is conserved. In Oryza sativa subsp. japonica (Rice), this protein is Germin-like protein 8-6.